Here is a 501-residue protein sequence, read N- to C-terminus: Cytochrome P450 71B23 (501 aa).

The helical transmembrane segment at 1–21 threads the bilayer; that stretch reads MSIFLCFLLLLLLLLVTIIFT. C443 is a binding site for heme.

The protein belongs to the cytochrome P450 family. The cofactor is heme.

It is found in the membrane. This is Cytochrome P450 71B23 (CYP71B23) from Arabidopsis thaliana (Mouse-ear cress).